The chain runs to 284 residues: D-tagatose-1,6-bisphosphate aldolase subunit GatY (284 aa).

Asp-82 serves as the catalytic Proton donor. Positions 83 and 180 each coordinate Zn(2+). A dihydroxyacetone phosphate-binding site is contributed by Gly-181. His-208 is a Zn(2+) binding site. Residues 209-211 (GAS) and 230-233 (NVAT) each bind dihydroxyacetone phosphate.

Belongs to the class II fructose-bisphosphate aldolase family. TagBP aldolase GatY subfamily. As to quaternary structure, forms a complex with GatZ. Zn(2+) is required as a cofactor.

The catalysed reaction is D-tagatofuranose 1,6-bisphosphate = D-glyceraldehyde 3-phosphate + dihydroxyacetone phosphate. Its pathway is carbohydrate metabolism; D-tagatose 6-phosphate degradation; D-glyceraldehyde 3-phosphate and glycerone phosphate from D-tagatose 6-phosphate: step 2/2. In terms of biological role, catalytic subunit of the tagatose-1,6-bisphosphate aldolase GatYZ, which catalyzes the reversible aldol condensation of dihydroxyacetone phosphate (DHAP or glycerone-phosphate) with glyceraldehyde 3-phosphate (G3P) to produce tagatose 1,6-bisphosphate (TBP). Requires GatZ subunit for full activity and stability. Is involved in the catabolism of galactitol. This is D-tagatose-1,6-bisphosphate aldolase subunit GatY from Salmonella choleraesuis (strain SC-B67).